We begin with the raw amino-acid sequence, 693 residues long: MSALEVQNINWQMPMNRRAHHTDKFSSQDFIVRRGQPWEVILLCNRSLESGDNLNFIVSTGPQPSESARTKAVFSISGRNTSGWSAALKASNGNNLFIAIASPVSAPIGLYTLNVEVSSKGRVSSVKLGTFTVLFNPWQQGDDVFMSNHAERQEYVEEDSGIIYVGSTNRIGMVGWNFGQFEEDILSISLSILDRSLNFRRDPATDVARRNDPKYVCRVLSAMINANDDSGVLSGNWSGNYSGGVDPRTWNGSVEILKNWKKSGFRPVQFGQCWVFAGTLNTVLRCLGVPSRVITNFNSAHDTDRNLSVDVYYDAMGNPLEKGSDSVWNFHVWNEGWFVRTDLGPSYNGWQVLDATPQERSQGVFQCGPASVNAIKDGEVDQNFDMIFIFAEVNADRITWIYNNRDGSQKQNSVDTYSIGKYISTKAVGSNSRMDVTIKYKHPEGSKEERQVQQKAMNKLKPNASFGATSSRGPQGEEKEPSISGKFKVTGVLAVGKEVSLALILKNTTSDRKTVTTNMTAWTIVYNGTLVHEVWKDSATISLDPEEEIQYPVKIAYSQYDRYLKADNMIRITAVCKVPDEAEVVVERDVILDNPTLTLEVLDQAQLRKPVVVQMLFSNPLDEPVKNCVLMVEGSGLLRGSLKIDVPALRPKEKSRVRFEIFPTRIGIKQLLADFSCNKFPAIKAMLVIEVSE.

Tyr111 is modified (phosphotyrosine). Phosphothreonine is present on Thr112. The Ca(2+) site is built by Ala222, Asn225, Asn227, and Asp228. Cys273 is a catalytic residue. Residues Asp302, Asp304, Asn306, Ser308, and Asp325 each contribute to the Ca(2+) site. Residues His331 and Asp354 contribute to the active site. Positions 394, 416, 444, and 449 each coordinate Ca(2+). A disordered region spans residues 455–482 (KAMNKLKPNASFGATSSRGPQGEEKEPS).

This sequence belongs to the transglutaminase superfamily. Transglutaminase family. In terms of assembly, consists of two polypeptide chains, which are synthesized as a precursor form of a single polypeptide. Ca(2+) serves as cofactor. In terms of processing, activated by proteolytic processing. In vitro activation is commonly achieved by cleavage with dispase, a neutral bacterial protease. Physiological activation may be catalyzed by CTSL and, to a lesser extent, by CTSS.

It localises to the cytoplasm. It carries out the reaction L-glutaminyl-[protein] + L-lysyl-[protein] = [protein]-L-lysyl-N(6)-5-L-glutamyl-[protein] + NH4(+). In terms of biological role, catalyzes the calcium-dependent formation of isopeptide cross-links between glutamine and lysine residues in various proteins, as well as the conjugation of polyamines to proteins. Involved in the formation of the cornified envelope (CE), a specialized component consisting of covalent cross-links of proteins beneath the plasma membrane of terminally differentiated keratinocytes. Catalyzes small proline-rich proteins and LOR cross-linking to form small interchain oligomers, which are further cross-linked by TGM1 onto the growing CE scaffold. In hair follicles, involved in cross-linking structural proteins to hardening the inner root sheath. The protein is Protein-glutamine gamma-glutamyltransferase E (Tgm3) of Rattus norvegicus (Rat).